The chain runs to 312 residues: Methionyl-tRNA formyltransferase (312 aa).

109–112 (SLLP) contributes to the (6S)-5,6,7,8-tetrahydrofolate binding site.

The protein belongs to the Fmt family.

It carries out the reaction L-methionyl-tRNA(fMet) + (6R)-10-formyltetrahydrofolate = N-formyl-L-methionyl-tRNA(fMet) + (6S)-5,6,7,8-tetrahydrofolate + H(+). Its function is as follows. Attaches a formyl group to the free amino group of methionyl-tRNA(fMet). The formyl group appears to play a dual role in the initiator identity of N-formylmethionyl-tRNA by promoting its recognition by IF2 and preventing the misappropriation of this tRNA by the elongation apparatus. The polypeptide is Methionyl-tRNA formyltransferase (Ruminiclostridium cellulolyticum (strain ATCC 35319 / DSM 5812 / JCM 6584 / H10) (Clostridium cellulolyticum)).